We begin with the raw amino-acid sequence, 191 residues long: Glycerol-3-phosphate acyltransferase (191 aa).

5 consecutive transmembrane segments (helical) span residues Leu10–Ala30, Phe57–Val77, Phe84–Phe104, Phe118–Leu138, and Tyr158–Ile178.

This sequence belongs to the PlsY family. As to quaternary structure, probably interacts with PlsX.

The protein localises to the cell inner membrane. It carries out the reaction an acyl phosphate + sn-glycerol 3-phosphate = a 1-acyl-sn-glycero-3-phosphate + phosphate. Its pathway is lipid metabolism; phospholipid metabolism. Its function is as follows. Catalyzes the transfer of an acyl group from acyl-phosphate (acyl-PO(4)) to glycerol-3-phosphate (G3P) to form lysophosphatidic acid (LPA). This enzyme utilizes acyl-phosphate as fatty acyl donor, but not acyl-CoA or acyl-ACP. This is Glycerol-3-phosphate acyltransferase from Neorickettsia sennetsu (strain ATCC VR-367 / Miyayama) (Ehrlichia sennetsu).